The chain runs to 514 residues: 2-isopropylmalate synthase (514 aa).

The 264-residue stretch at 5 to 268 (LIIFDTTLRD…DVGLDTTQIV (264 aa)) folds into the Pyruvate carboxyltransferase domain. Residues Asp-14, His-202, His-204, and Asn-239 each contribute to the Mn(2+) site. The interval 395–514 (KFVSLSQRSE…KDDKLNPQRS (120 aa)) is regulatory domain.

Belongs to the alpha-IPM synthase/homocitrate synthase family. LeuA type 1 subfamily. Homodimer. It depends on Mn(2+) as a cofactor.

The protein resides in the cytoplasm. The enzyme catalyses 3-methyl-2-oxobutanoate + acetyl-CoA + H2O = (2S)-2-isopropylmalate + CoA + H(+). The protein operates within amino-acid biosynthesis; L-leucine biosynthesis; L-leucine from 3-methyl-2-oxobutanoate: step 1/4. In terms of biological role, catalyzes the condensation of the acetyl group of acetyl-CoA with 3-methyl-2-oxobutanoate (2-ketoisovalerate) to form 3-carboxy-3-hydroxy-4-methylpentanoate (2-isopropylmalate). The chain is 2-isopropylmalate synthase from Burkholderia ambifaria (strain ATCC BAA-244 / DSM 16087 / CCUG 44356 / LMG 19182 / AMMD) (Burkholderia cepacia (strain AMMD)).